Consider the following 591-residue polypeptide: Polyphenol oxidase D, chloroplastic (591 aa).

The transit peptide at 1–83 directs the protein to the chloroplast; sequence MASLCSNSST…ANAIPLAASA (83 aa). Disulfide bonds link C94–C110 and C109–C177. Cu cation is bound by residues H176, H194, H203, H324, H328, and H366. Residues 180-194 constitute a cross-link (2'-(S-cysteinyl)-histidine (Cys-His)); that stretch reads CNGAYRIGGKELQVH.

Belongs to the tyrosinase family. Requires Cu(2+) as cofactor.

The protein resides in the plastid. It is found in the chloroplast thylakoid lumen. The catalysed reaction is 2 catechol + O2 = 2 1,2-benzoquinone + 2 H2O. Functionally, catalyzes the oxidation of mono- and o-diphenols to o-diquinones. This is Polyphenol oxidase D, chloroplastic from Solanum lycopersicum (Tomato).